The following is a 248-amino-acid chain: Probable transcriptional regulatory protein Msil_2305 (248 aa).

It belongs to the TACO1 family.

It localises to the cytoplasm. In Methylocella silvestris (strain DSM 15510 / CIP 108128 / LMG 27833 / NCIMB 13906 / BL2), this protein is Probable transcriptional regulatory protein Msil_2305.